The sequence spans 132 residues: MKGIAGREIRGLPLGANIVCADNTGARSISLIDVKAYHGKARRIPAAGVGDMFIASVKKGTPEMRSKVVYAVVIRQKRPYRRPDGTMVEFEDNAAVLVTPDGEVRGSEIKGPVAREAAERWPRIAAIASIIV.

The protein belongs to the universal ribosomal protein uL14 family. As to quaternary structure, part of the 50S ribosomal subunit. Forms a cluster with proteins L3 and L24e, part of which may contact the 16S rRNA in 2 intersubunit bridges.

Its function is as follows. Binds to 23S rRNA. Forms part of two intersubunit bridges in the 70S ribosome. The sequence is that of Large ribosomal subunit protein uL14 from Thermoplasma volcanium (strain ATCC 51530 / DSM 4299 / JCM 9571 / NBRC 15438 / GSS1).